A 142-amino-acid polypeptide reads, in one-letter code: Protein lin-32 (142 aa).

A compositionally biased stretch (polar residues) spans 30–48 (PLQSPNFSLDSPNYPDSLS). The disordered stretch occupies residues 30 to 66 (PLQSPNFSLDSPNYPDSLSNGGGKDDKKKCRRYKTPS). The region spanning 72–124 (MRRSAANERERRRMNTLNVAYDELREVLPEIDSGKKLSKFETLQMAQKYIECL) is the bHLH domain.

Forms a heterodimer with hlh-2. In terms of tissue distribution, expressed in PVD motor neurons.

Its subcellular location is the nucleus. Its function is as follows. Probable transcription factor which binds the E box motif 5'-CA[TC][AG]TG-3'. Essential for the specification of the neuroblast cell fate in the development of peripheral sense organs. Its role in the generation of sensory neurons may be through positively regulating the expression of the zinc finger protein ztf-11 during postdeirid neurogenesis. Required for specification of cell fate, acting in concert with lin-32, in the development of the male-specific genital sensilla (simple sense organs) known as rays. Involved in regulating glial specification, perhaps by suppressing a glial fate in different lineages during early embryogenesis. In Caenorhabditis elegans, this protein is Protein lin-32.